A 483-amino-acid polypeptide reads, in one-letter code: Glutamate--tRNA ligase (483 aa).

A 'HIGH' region motif is present at residues 11 to 21 (PSPTGHLHIGN). Residues C108, C110, H135, and D137 each contribute to the Zn(2+) site. A 'KMSKS' region motif is present at residues 252–256 (KLSKR). Residue K255 participates in ATP binding.

It belongs to the class-I aminoacyl-tRNA synthetase family. Glutamate--tRNA ligase type 1 subfamily. Monomer. Zn(2+) serves as cofactor.

Its subcellular location is the cytoplasm. The enzyme catalyses tRNA(Glu) + L-glutamate + ATP = L-glutamyl-tRNA(Glu) + AMP + diphosphate. Catalyzes the attachment of glutamate to tRNA(Glu) in a two-step reaction: glutamate is first activated by ATP to form Glu-AMP and then transferred to the acceptor end of tRNA(Glu). The sequence is that of Glutamate--tRNA ligase from Bacillus subtilis (strain 168).